A 688-amino-acid polypeptide reads, in one-letter code: Hid-1 family protein P19A11.07c (688 aa).

Belongs to the hid-1 family.

The protein localises to the cytoplasm. It is found in the nucleus. The polypeptide is Hid-1 family protein P19A11.07c (Schizosaccharomyces pombe (strain 972 / ATCC 24843) (Fission yeast)).